The chain runs to 151 residues: UPF0251 protein Ctha_0452 (151 aa).

This sequence belongs to the UPF0251 family.

The sequence is that of UPF0251 protein Ctha_0452 from Chloroherpeton thalassium (strain ATCC 35110 / GB-78).